A 923-amino-acid chain; its full sequence is MGSGAGELGRAERLPVLFLFLLSLFCPALCEQIRYRIPEEMPKGSVVGNLATDLGFSVQELPTRKLRVSSEKPYFTVSAESGELLVSSRLDREEICGKKPACALEFEAVAENPLNFYHVNVEIEDINDHTPKFTQNSFELQISESAQPGTRFILEVAEDADIGLNSLQKYKLSLNPSFSLIIKEKQDGSKYPELALEKTLDREQQSYHRLVLTALDGGHPPLSGTTELRIQVTDANDNPPVFNRDVYRVSLRENVPPGTTVLQVSATDQDEGINSEITYSFYRTGQIFSLNSKSGEITTQKKLDFEETKEYSMVVEGRDGGGLVAQCTVEINIQDENDNSPEVTFHSLLEMILENAVPGTLIALIKIHDQDSGENGEVNCQLQGEVPFKIISSSKNSYKLVTDGTLDREQTPEYNVTITATDRGKPPLSSSISVILHIRDVNDNAPVFHQASYLVSVPENNPPGASIAQVCASDLDLGLNGQVSYSIMASDLEPLALASYVSMSAQSGVVFAQRAFDYEQLRTFELTLQARDQGSPALSANVSLRVLVGDRNDNAPRVLYPALGPDGSALFDMVPRAAEPGYLVTKVVAVDADSGHNAWLSYHVLQASEPGLFSLGLRTGEVRTARALGDRDAARQRLLVAVRDGGQPPLSATATLHLVFADSLQEVLPDITDRPVPSDPQAELQFYLVVALALISVLFLLAVILAVALRLRRSSSPAAWSCFQPGLCVKSGPVVPPNYSQGTLPYSYNLCVAHTGKTEFNFLKCSEQLSSGQDILCGDSSGALFPLCNSSESTSHPELQAPPNTDWRFSQAQRPGTSGSQNGDDTGTWPNNQFDTEMLQAMILASASEAADGSSTLGGGAGTMGLSARYGPQFTLQHVPDYRQNVYIPGSNATLTNAAGKRDGKAPAGGNGNKKKSGKKEKK.

The N-terminal stretch at 1 to 30 (MGSGAGELGRAERLPVLFLFLLSLFCPALC) is a signal peptide. Cadherin domains follow at residues 31–133 (EQIR…TPKF), 134–242 (TQNS…PPVF), 243–343 (NRDV…SPEV), 344–448 (TFHS…APVF), 449–558 (HQAS…APRV), and 566–671 (DGSA…LPDI). The Extracellular portion of the chain corresponds to 31–687 (EQIRYRIPEE…SDPQAELQFY (657 aa)). N-linked (GlcNAc...) asparagine glycosylation is found at Asn-415 and Asn-541. The helical transmembrane segment at 688–708 (LVVALALISVLFLLAVILAVA) threads the bilayer. Residues 709-923 (LRLRRSSSPA…KKKSGKKEKK (215 aa)) are Cytoplasmic-facing. Disordered stretches follow at residues 794–832 (TSHP…WPNN) and 893–923 (ATLT…KEKK). A compositionally biased stretch (polar residues) spans 807 to 832 (WRFSQAQRPGTSGSQNGDDTGTWPNN). Residues 913-923 (NKKKSGKKEKK) show a composition bias toward basic residues.

Its subcellular location is the cell membrane. In terms of biological role, potential calcium-dependent cell-adhesion protein. May be involved in the establishment and maintenance of specific neuronal connections in the brain. This Homo sapiens (Human) protein is Protocadherin gamma-B5 (PCDHGB5).